An 81-amino-acid polypeptide reads, in one-letter code: MKTLLLTLVVVTIVCLDLGNSLICYVSREGQTQTCPEGMNLCEKYAVSYFHDGRYFFTYECTSTCHRGDRNVCCSTDLCNK.

A signal peptide spans 1–21 (MKTLLLTLVVVTIVCLDLGNS). Intrachain disulfides connect Cys-24-Cys-42, Cys-35-Cys-61, Cys-65-Cys-73, and Cys-74-Cys-79.

This sequence belongs to the three-finger toxin family. Short-chain subfamily. Expressed by the venom gland.

It is found in the secreted. Its function is as follows. Snake venom neurotoxin that blocks neuromuscular transmission, presenting a postsynaptic action through the nicotinic acetylcholine receptor (nAChR). Has no cytotoxic activity. In Micrurus mipartitus (Red-tailed coral snake), this protein is Mipartoxin-2.